Here is a 496-residue protein sequence, read N- to C-terminus: Glutathione reductase, cytosolic (496 aa).

FAD is bound by residues serine 32, glycine 33, glutamate 52, threonine 69, cysteine 70, and lysine 78. Residue serine 32 participates in glutathione binding. A disulfide bridge links cysteine 70 with cysteine 75. Tyrosine 127 contributes to the glutathione binding site. Glycine 143 lines the FAD pocket. The NADP(+) site is built by glycine 208, isoleucine 211, glutamate 214, arginine 231, arginine 237, and glycine 294. FAD-binding residues include aspartate 335 and threonine 343. Position 373 (alanine 373) interacts with NADP(+). Residue histidine 469 participates in FAD binding. The active-site Proton acceptor is histidine 469.

It belongs to the class-I pyridine nucleotide-disulfide oxidoreductase family. Homodimer. FAD is required as a cofactor.

The protein localises to the cytoplasm. It catalyses the reaction 2 glutathione + NADP(+) = glutathione disulfide + NADPH + H(+). In terms of biological role, catalyzes the reduction of glutathione disulfide (GSSG) to reduced glutathione (GSH). Constitutes the major mechanism to maintain a high GSH:GSSG ratio in the cytosol. The sequence is that of Glutathione reductase, cytosolic (GRC2) from Oryza sativa subsp. japonica (Rice).